A 251-amino-acid polypeptide reads, in one-letter code: MNLNSIPAFDDNYIWVLNDEAGRCLIVDPGDAEPVLNAIAANNWQPEAIFLTHHHHDHVGGVKELVEKFPQIVVYGPQETQDKGTTQVVKDGETAFVLGHEFSVIATPGHTLGHICYFSKPYLFCGDTLFSGGCGRLFEGTASQMYQSINKLSALPDDTLVCCAHEYTLSNMKFALSILPHDLSINDYYRKVKELRAKNQITLPVILKNERQINVFLRTEDIDLINVINEETLLQQPEERFAWLRSKKDRF.

Residues histidine 53, histidine 55, aspartate 57, histidine 58, histidine 110, aspartate 127, and histidine 165 each contribute to the Zn(2+) site.

This sequence belongs to the metallo-beta-lactamase superfamily. Glyoxalase II family. In terms of assembly, monomer. Requires Zn(2+) as cofactor.

It carries out the reaction an S-(2-hydroxyacyl)glutathione + H2O = a 2-hydroxy carboxylate + glutathione + H(+). It participates in secondary metabolite metabolism; methylglyoxal degradation; (R)-lactate from methylglyoxal: step 2/2. Functionally, thiolesterase that catalyzes the hydrolysis of S-D-lactoyl-glutathione to form glutathione and D-lactic acid. This Escherichia coli (strain SE11) protein is Hydroxyacylglutathione hydrolase.